The primary structure comprises 226 residues: UPF0758 protein M6_Spy0838 (226 aa).

Residues 103–225 (SVLTSVQVAE…YYSFREKSTL (123 aa)) form the MPN domain. Residues His-174, His-176, and Asp-187 each coordinate Zn(2+). Positions 174–187 (HNHPSGNIEPSSND) match the JAMM motif motif.

This sequence belongs to the UPF0758 family.

This is UPF0758 protein M6_Spy0838 from Streptococcus pyogenes serotype M6 (strain ATCC BAA-946 / MGAS10394).